A 148-amino-acid polypeptide reads, in one-letter code: Small ribosomal subunit protein eS19 (148 aa).

The protein belongs to the eukaryotic ribosomal protein eS19 family. In terms of assembly, part of the 30S ribosomal subunit.

Its function is as follows. May be involved in maturation of the 30S ribosomal subunit. This Methanocaldococcus jannaschii (strain ATCC 43067 / DSM 2661 / JAL-1 / JCM 10045 / NBRC 100440) (Methanococcus jannaschii) protein is Small ribosomal subunit protein eS19.